A 458-amino-acid polypeptide reads, in one-letter code: Flavohemoprotein (458 aa).

The region spanning 2–158 is the Globin domain; it reads TLSEDTLRAV…LADLFIKREE (157 aa). H107 contributes to the heme b binding site. Catalysis depends on charge relay system residues Y117 and E157. The tract at residues 169–457 is reductase; that stretch reads GGWRQTRTFR…FEMFGPFKAS (289 aa). Residues 172–279 enclose the FAD-binding FR-type domain; that stretch reads RQTRTFRVEE…APPYGDFFLR (108 aa). FAD-binding positions include Y211 and 228–231; that span reads RQYS. NADP(+) is bound at residue 321 to 326; that stretch reads GIGQTP. FAD is bound at residue 450 to 453; that stretch reads MFGP.

The protein belongs to the globin family. Two-domain flavohemoproteins subfamily. It in the C-terminal section; belongs to the flavoprotein pyridine nucleotide cytochrome reductase family. In terms of assembly, monomer. Heme b serves as cofactor. FAD is required as a cofactor.

The enzyme catalyses 2 nitric oxide + NADPH + 2 O2 = 2 nitrate + NADP(+) + H(+). It catalyses the reaction 2 nitric oxide + NADH + 2 O2 = 2 nitrate + NAD(+) + H(+). Its function is as follows. Flavohemoprotein involved in nitric oxide (NO) detoxification in an aerobic process, termed nitric oxide dioxygenase (NOD) reaction that utilizes O(2) and NAD(P)H to convert NO to nitrate, which protects the protozoan parasite from various noxious nitrogen compounds. Therefore, plays a central role in the inducible response to nitrosative stress. May also be involved in O(2) detoxification. This chain is Flavohemoprotein (hmpA), found in Giardia intestinalis (strain ATCC 50803 / WB clone C6) (Giardia lamblia).